The following is a 304-amino-acid chain: dTDP-4-dehydrorhamnose reductase (304 aa).

Residues 15 to 17 (GQL), 41 to 42 (DI), and 63 to 65 (AYT) contribute to the NADH site. NADPH contacts are provided by residues 16–17 (QL), 41–42 (DI), and 63–65 (AYT). A dTDP-beta-L-rhamnose-binding site is contributed by 104 to 105 (TD). Residues Y132 and K136 each contribute to the NADH site. NADPH contacts are provided by Y132 and K136. The active-site Proton donor/acceptor is the Y132. A dTDP-beta-L-rhamnose-binding site is contributed by W157.

It belongs to the dTDP-4-dehydrorhamnose reductase family. Mg(2+) is required as a cofactor.

It carries out the reaction dTDP-beta-L-rhamnose + NADP(+) = dTDP-4-dehydro-beta-L-rhamnose + NADPH + H(+). The protein operates within carbohydrate biosynthesis; dTDP-L-rhamnose biosynthesis. In terms of biological role, involved in the biosynthesis of the dTDP-L-rhamnose which is a component of the critical linker, D-N-acetylglucosamine-L-rhamnose disaccharide, which connects the galactan region of arabinogalactan to peptidoglycan via a phosphodiester linkage. Catalyzes the reduction of dTDP-6-deoxy-L-lyxo-4-hexulose to yield dTDP-L-rhamnose. The chain is dTDP-4-dehydrorhamnose reductase from Mycobacterium tuberculosis (strain CDC 1551 / Oshkosh).